The primary structure comprises 219 residues: Uracil-DNA glycosylase (219 aa).

Catalysis depends on D61, which acts as the Proton acceptor.

This sequence belongs to the uracil-DNA glycosylase (UDG) superfamily. UNG family.

Its subcellular location is the cytoplasm. The enzyme catalyses Hydrolyzes single-stranded DNA or mismatched double-stranded DNA and polynucleotides, releasing free uracil.. In terms of biological role, excises uracil residues from the DNA which can arise as a result of misincorporation of dUMP residues by DNA polymerase or due to deamination of cytosine. The polypeptide is Uracil-DNA glycosylase (Neisseria gonorrhoeae (strain ATCC 700825 / FA 1090)).